A 516-amino-acid chain; its full sequence is Histidine ammonia-lyase 1 (516 aa).

Positions 147–149 form a cross-link, 5-imidazolinone (Ser-Gly); sequence SSG. Position 148 is a 2,3-didehydroalanine (Ser) (Ser148).

It belongs to the PAL/histidase family. Contains an active site 4-methylidene-imidazol-5-one (MIO), which is formed autocatalytically by cyclization and dehydration of residues Ser-Ser-Gly.

Its subcellular location is the cytoplasm. It carries out the reaction L-histidine = trans-urocanate + NH4(+). It functions in the pathway amino-acid degradation; L-histidine degradation into L-glutamate; N-formimidoyl-L-glutamate from L-histidine: step 1/3. The sequence is that of Histidine ammonia-lyase 1 (hutH1) from Fusobacterium nucleatum subsp. nucleatum (strain ATCC 25586 / DSM 15643 / BCRC 10681 / CIP 101130 / JCM 8532 / KCTC 2640 / LMG 13131 / VPI 4355).